The following is a 406-amino-acid chain: Leu/Ile/Val-binding protein homolog 5 (406 aa).

The first 29 residues, 1 to 29 (MIGTRLPAWTRVLACGVAGLSLMTISAKA), serve as a signal peptide directing secretion.

It belongs to the leucine-binding protein family.

Functionally, component of an amino-acid transport system. This chain is Leu/Ile/Val-binding protein homolog 5, found in Brucella abortus (strain 2308).